A 1230-amino-acid chain; its full sequence is MASASYHISNLLEKMTSSDKDFRFMATNDLMTELQKDSIKLDDDSERKVVKMILKLLEDKNGEVQNLAVKCLGPLVSKVKEYQVETIVDTLCTNMLSDKEQLRDISSIGLKTVIGELPPASSGSALAANVCKKITGRLTSAIAKQEDVSVQLEALDIMADMLSRQGGLLVNFHPSILTCLLPQLTSPRLAVRKRTIIALGHLVMSCGNIVFVDLIEHLLSELSKNDSMSTTRTYIQCIAAISRQAGHRIGEYLEKIIPLVVKFCNVDDDELREYCIQAFESFVRRCPKEVYPHVSTIINICLKYLTYDPNYNYDDEDEDENAMDADGGDDDDQGSDDEYSDDDDMSWKVRRAAAKCLDAVVSTRHEMLPEFYKTVSPALISRFKEREENVKADVFHAYLSLLKQTRPVQSWLCDPDAMEQGETPLTMLQSQVPNIVKALHKQMKEKSVKTRQCCFNMLTELVNVLPGALTQHIPVLVPGIIFSLNDKSSSSNLKIDALSCLYVILCNHSPQVFHPHVQALVPPVVACVGDPFYKITSEALLVTQQLVKVIRPLDQPSSFDATPYIKDLFTCTIKRLKAADIDQEVKERAISCMGQIICNLGDNLGSDLPNTLQIFLERLKNEITRLTTVKALTLIAGSPLKIDLRPVLGEGVPILASFLRKNQRALKLGTLSALDILIKNYSDSLTAAMIDAVLDELPPLISESDMHVSQMAISFLTTLAKVYPSSLSKISGSILNELIGLVRSPLLQGGALSAMLDFFQALVVTGTNNLGYMDLLRMLTGPVYSQSTALTHKQSYYSIAKCVAALTRACPKEGPAVVGQFIQDVKNSRSTDSIRLLALLSLGEVGHHIDLSGQLELKSVILEAFSSPSEEVKSAASYALGSISVGNLPEYLPFVLQEITSQPKRQYLLLHSLKEIISSASVVGLKPYVENIWALLLKHCECAEEGTRNVVAECLGKLTLIDPETLLPRLKGYLISGSSYARSSVVTAVKFTISDHPQPIDPLLKNCIGDFLKTLEDPDLNVRRVALVTFNSAAHNKPSLIRDLLDTVLPHLYNETKVRKELIREVEMGPFKHTVDDGLDIRKAAFECMYTLLDSCLDRLDIFEFLNHVEDGLKDHYDIKMLTFLMLVRLSTLCPSAVLQRLDRLVEPLRATCTTKVKANSVKQEFEKQDELKRSAMRAVAALLTIPEAEKSPLMSEFQSQISSNPELAAIFESIQKDSSSTNLESMDTS.

Ala2 carries the post-translational modification N-acetylalanine. 12 HEAT repeats span residues 2–39 (ASAS…KDSI), 44–81 (DSER…KVKE), 83–119 (QVET…ELPP), 131–165 (CKKI…LSRQ), 171–208 (NFHP…SCGN), 210–247 (VFVD…QAGH), 248–282 (RIGE…FESF), 289–366 (EVYP…TRHE), 370–407 (EFYK…QTRP), 424–467 (PLTM…VLPG), 471–510 (QHIP…NHSP), and 515–552 (PHVQ…VIRP). N6-acetyllysine is present on Lys55. Positions 315–344 (DEDEDENAMDADGGDDDDQGSDDEYSDDDD) are disordered. Ser335 is subject to Phosphoserine. Phosphoserine is present on Ser558. HEAT repeat units lie at residues 563–602 (PYIK…NLGD), 606–643 (SDLP…LKID), 646–683 (PVLG…NYSD), 688–725 (AMID…VYPS), 729–768 (KISG…TGTN), 770–808 (LGYM…ALTR), 809–845 (ACPK…LGEV), 852–889 (SGQL…GNLP), 890–927 (EYLP…GLKP), 928–960 (YVEN…KLTL), 961–998 (IDPE…DHPQ), 1002–1039 (PLLK…NKPS), 1043–1097 (DLLD…DSCL), 1099–1133 (RLDI…LSTL), and 1140–1189 (QRLD…IPEA). Residue Lys971 is modified to N6-acetyllysine.

Belongs to the CAND family. As to quaternary structure, interacts with TBP. Part of a complex that contains CUL1 and RBX1. Interacts with unneddylated cullins: interacts with CUL1, CUL2, CUL3, CUL4A, CUL4B and CUL5. Does not bind neddylated CUL1. Interaction with cullins is abolished in presence of COMMD1, which antagonizes with CAND1 for interacting with cullins. Interacts with ERCC6. Interacts with DCUN1D1, DCUN1D2, DCUN1D3, DCUN1D4 and DCUN1D5; these interactions are bridged by cullins and strongly inhibits the neddylation of cullins.

It is found in the cytoplasm. It localises to the nucleus. Functionally, key assembly factor of SCF (SKP1-CUL1-F-box protein) E3 ubiquitin ligase complexes that promotes the exchange of the substrate-recognition F-box subunit in SCF complexes, thereby playing a key role in the cellular repertoire of SCF complexes. Acts as a F-box protein exchange factor. The exchange activity of CAND1 is coupled with cycles of neddylation conjugation: in the deneddylated state, cullin-binding CAND1 binds CUL1-RBX1, increasing dissociation of the SCF complex and promoting exchange of the F-box protein. Probably plays a similar role in other cullin-RING E3 ubiquitin ligase complexes. This chain is Cullin-associated NEDD8-dissociated protein 1 (CAND1), found in Bos taurus (Bovine).